Here is a 178-residue protein sequence, read N- to C-terminus: FXYD domain-containing ion transport regulator 5 (178 aa).

The N-terminal stretch at 1 to 21 (MSPPSQLCLLTIVALILPSEG) is a signal peptide. Residues 21 to 126 (GQTPEKPRSS…YMPPSYIENP (106 aa)) are disordered. At 22-146 (QTPEKPRSSF…YDNTTLRKRG (125 aa)) the chain is on the extracellular side. The span at 29–58 (SSFTAHQSSVTTHVPVPDQTSPGVQTTPPI) shows a compositional bias: polar residues. Low complexity predominate over residues 70 to 79 (QTAAKTKTQQ). The helical transmembrane segment at 147–164 (LLVAAVLFITGIIILTSG) threads the bilayer. At 165 to 178 (KCRQFSQLCLNRHR) the chain is on the cytoplasmic side.

Belongs to the FXYD family. In terms of assembly, regulatory subunit of the sodium/potassium-transporting ATPase which is composed of a catalytic alpha subunit, a non-catalytic beta subunit and an additional regulatory subunit. The regulatory subunit, a member of the FXYD protein family, modulates the enzymatic activity in a tissue- and isoform-specific way by changing affinities of the Na+/K+-ATPase toward Na(+), K(+) or ATP. Post-translationally, glycosylated. As to expression, spleen, lung, skeletal muscle, and testis.

The protein localises to the cell membrane. Its subcellular location is the basolateral cell membrane. In terms of biological role, associates with and regulates the activity of the sodium/potassium-transporting ATPase (NKA) which catalyzes the hydrolysis of ATP coupled with the exchange of Na(+) and K(+) ions across the plasma membrane. May increase NKA activity by increasing the apparent affinity for Na(+). Involved in down-regulation of E-cadherin which results in reduced cell adhesion. Promotes metastasis. This is FXYD domain-containing ion transport regulator 5 (Fxyd5) from Rattus norvegicus (Rat).